Reading from the N-terminus, the 258-residue chain is Thiazole synthase (258 aa).

Lys98 (schiff-base intermediate with DXP) is an active-site residue. 1-deoxy-D-xylulose 5-phosphate contacts are provided by residues Gly159, 185–186, and 207–208; these read AG and NT.

The protein belongs to the ThiG family. As to quaternary structure, homotetramer. Forms heterodimers with either ThiH or ThiS.

The protein localises to the cytoplasm. It catalyses the reaction [ThiS sulfur-carrier protein]-C-terminal-Gly-aminoethanethioate + 2-iminoacetate + 1-deoxy-D-xylulose 5-phosphate = [ThiS sulfur-carrier protein]-C-terminal Gly-Gly + 2-[(2R,5Z)-2-carboxy-4-methylthiazol-5(2H)-ylidene]ethyl phosphate + 2 H2O + H(+). It participates in cofactor biosynthesis; thiamine diphosphate biosynthesis. Functionally, catalyzes the rearrangement of 1-deoxy-D-xylulose 5-phosphate (DXP) to produce the thiazole phosphate moiety of thiamine. Sulfur is provided by the thiocarboxylate moiety of the carrier protein ThiS. In vitro, sulfur can be provided by H(2)S. The protein is Thiazole synthase of Bacillus cereus (strain ZK / E33L).